We begin with the raw amino-acid sequence, 434 residues long: MSIEKIWAREILDSRGNPTVEVDLYTAKGLFRAAVPSGASTGIYEALELRDGDKQRYLGKGVLKAVDHINSRIAPALISSGISVVEQEKLDNLMLELDGTENKSKFGANAILGVSLAVCKAGAAERDLPLYRHIAQLAGNSDLILPVPAFNVINGGSHAGNKLAMQEFMILPVGAESFRDAMRLGAEVYHTLKGVIKDKYGKDATNVGDEGGFAPNILENSEALELVKEAIDKAGYTEKMVIGMDVAASEFYRDGKYDLDFKSPADPSRYITGDQLGALYQDFVRNYPVVSIEDPFDQDDWAAWSKFTANVGIQIVGDDLTVTNPKRIERAVEEKACNCLLLKVNQIGSVTEAIQACKLAQENGWGVMVSHRSGETEDTFIADLVVGLCTGQIKTGAPCRSERLAKYNQLMRIEEELGDEARFAGHNFRNPSVL.

At S2 the chain carries N-acetylserine. K5 is modified (N6-acetyllysine). T26 is modified (phosphothreonine). A Mg(2+)-binding site is contributed by S40. At Y44 the chain carries Phosphotyrosine. An N6-acetyllysine; alternate modification is found at K60. N6-succinyllysine; alternate is present on K60. Position 64 is an N6-acetyllysine (K64). The residue at position 89 (K89) is an N6-acetyllysine; alternate. K89 carries the N6-succinyllysine; alternate modification. H158 and E167 together coordinate substrate. N6-acetyllysine is present on residues K193, K197, and K199. K202 is subject to N6-acetyllysine; alternate. K202 is covalently cross-linked (Glycyl lysine isopeptide (Lys-Gly) (interchain with G-Cter in SUMO2); alternate). E210 functions as the Proton donor in the catalytic mechanism. Residues K228 and K233 each carry the N6-acetyllysine; alternate modification. An N6-succinyllysine; alternate modification is found at K228. At K233 the chain carries N6-(2-hydroxyisobutyryl)lysine; alternate. Position 245 (D245) interacts with Mg(2+). K256 carries the post-translational modification N6-acetyllysine. Residue S263 is modified to Phosphoserine. Phosphotyrosine is present on Y287. A Phosphoserine modification is found at S291. E293 and D318 together coordinate Mg(2+). The substrate site is built by E293 and D318. N6-acetyllysine occurs at positions 335 and 343. Catalysis depends on K343, which acts as the Proton acceptor. Residues S370–S373 and K394 each bind substrate. The residue at position 406 (K406) is an N6-acetyllysine.

It belongs to the enolase family. In terms of assembly, mammalian enolase is composed of 3 isozyme subunits, alpha, beta and gamma, which can form homodimers or heterodimers which are cell-type and development-specific. Mg(2+) is required as a cofactor. In terms of tissue distribution, skeletal muscle (at protein level). The alpha/alpha homodimer is expressed in embryo and in most adult tissues. The alpha/beta heterodimer and the beta/beta homodimer are found in striated muscle, and the alpha/gamma heterodimer and the gamma/gamma homodimer in neurons.

Its subcellular location is the cytoplasm. It localises to the cell membrane. The enzyme catalyses (2R)-2-phosphoglycerate = phosphoenolpyruvate + H2O. It participates in carbohydrate degradation; glycolysis; pyruvate from D-glyceraldehyde 3-phosphate: step 4/5. In terms of biological role, has neurotrophic and neuroprotective properties on a broad spectrum of central nervous system (CNS) neurons. Binds, in a calcium-dependent manner, to cultured neocortical neurons and promotes cell survival. The chain is Gamma-enolase (Eno2) from Mus musculus (Mouse).